The chain runs to 203 residues: MNMPMTERIRAGKLFTDMCEGLPEKRLRGKTLMYEFNHSHPSEVEKRESLIKEMFATVGENAWVEPPVYFSYGSNIHIGRNFYANFNLTIVDDYTVTIGDNVLIAPNVTLSVTGHPVHHELRKNGEMYSFPITIGNNVWIGSHVVINPGVTIGDNSVIGAGSIVTKDIPPNVVAAGVPCRVIREINDRDKHYYFKDYKVESSV.

Residues Asp-17, Ser-71, Asn-85, and Asp-93 each contribute to the substrate site. Asn-85 provides a ligand contact to acetyl-CoA. Residue His-115 is the Proton donor/acceptor of the active site. Acetyl-CoA contacts are provided by residues Ser-142, Ala-160, 165–166 (TK), Arg-180, and Arg-183.

The protein belongs to the transferase hexapeptide repeat family. Homotrimer. The N-terminus of this protein is heterogeneous because the initiator methionine is only partially cleaved.

Its subcellular location is the cytoplasm. The enzyme catalyses a beta-D-galactoside + acetyl-CoA = a 6-acetyl-beta-D-galactoside + CoA. In terms of biological role, catalyzes the CoA-dependent transfer of an acetyl group to the 6-O-methyl position of a range of galactosides, glucosides, and lactosides. May assist cellular detoxification by acetylating non-metabolizable pyranosides, thereby preventing their reentry into the cell. The protein is Galactoside O-acetyltransferase (lacA) of Escherichia coli (strain K12).